We begin with the raw amino-acid sequence, 43 residues long: S-layer protein 1 (43 aa).

It is found in the secreted. Its subcellular location is the cell wall. The protein localises to the S-layer. The S-layer is a paracrystalline mono-layered assembly of proteins which coat the surface of bacteria. The sequence is that of S-layer protein 1 from Bacillus thuringiensis subsp. konkukian.